The sequence spans 92 residues: Small ribosomal subunit protein uS19 (92 aa).

Belongs to the universal ribosomal protein uS19 family.

Functionally, protein S19 forms a complex with S13 that binds strongly to the 16S ribosomal RNA. The chain is Small ribosomal subunit protein uS19 from Leuconostoc mesenteroides subsp. mesenteroides (strain ATCC 8293 / DSM 20343 / BCRC 11652 / CCM 1803 / JCM 6124 / NCDO 523 / NBRC 100496 / NCIMB 8023 / NCTC 12954 / NRRL B-1118 / 37Y).